A 443-amino-acid chain; its full sequence is DILAAFRVTPQPGVPPEEAGAAVAAESSTGTWTTVWTDGLTSLDRYKGRCYDIEPVPGEDNQYICYVAYPLDLFEEGSVTNMFTSIVGNVFGFKALRALRLEDLRIPVAYVKTFQGPPHGIQVERDKLNKYGRPLLGCTIKPKLGLSAKNYGRAVYECLRGGLDFTKDDENVNSQPFMRWRDRFLFCAEAIYKAQAETGEIKGHYLNATAGTCEEMMKRAIFARELGVPIVMHDYLTGGFTANTSLAHYCRDNGLLLHIHRAMHAVIDRQKNHGIHFRVLAKALRMSGGDHIHSGTVVGKLEGERDITLGFVDLLRDDYIEKDRSRGIYFTQDWVSLPGVLPVASGGIHVWHMPALTEIFGDDSVLQFGGGTLGHPWGNAPGAVANRVALEACVQARNEGRDLAREGNEIIREASKWSPELAAACEVWKEIKFEFQAMDTLDK.

Substrate contacts are provided by Asn-89 and Thr-139. Lys-141 serves as the catalytic Proton acceptor. Lys-143 is a binding site for substrate. Mg(2+)-binding residues include Lys-167, Asp-169, and Glu-170. An N6-carboxylysine modification is found at Lys-167. His-260 acts as the Proton acceptor in catalysis. 3 residues coordinate substrate: Arg-261, His-293, and Ser-345.

This sequence belongs to the RuBisCO large chain family. Type I subfamily. As to quaternary structure, heterohexadecamer of 8 large chains and 8 small chains; disulfide-linked. The disulfide link is formed within the large subunit homodimers. It depends on Mg(2+) as a cofactor. In terms of processing, the disulfide bond which can form in the large chain dimeric partners within the hexadecamer appears to be associated with oxidative stress and protein turnover.

The protein localises to the plastid. The protein resides in the chloroplast. The enzyme catalyses 2 (2R)-3-phosphoglycerate + 2 H(+) = D-ribulose 1,5-bisphosphate + CO2 + H2O. It catalyses the reaction D-ribulose 1,5-bisphosphate + O2 = 2-phosphoglycolate + (2R)-3-phosphoglycerate + 2 H(+). Functionally, ruBisCO catalyzes two reactions: the carboxylation of D-ribulose 1,5-bisphosphate, the primary event in carbon dioxide fixation, as well as the oxidative fragmentation of the pentose substrate in the photorespiration process. Both reactions occur simultaneously and in competition at the same active site. This Villarsia calthifolia (Marsh flower) protein is Ribulose bisphosphate carboxylase large chain.